A 449-amino-acid chain; its full sequence is Argininosuccinate synthase (449 aa).

ATP is bound by residues 17–25 and A43; that span reads AFSGGLDTS. Y99 contributes to the L-citrulline binding site. 2 residues coordinate ATP: G129 and T131. L-aspartate is bound by residues T131, N135, and D136. N135 contacts L-citrulline. D136 lines the ATP pocket. 2 residues coordinate L-citrulline: R139 and S192. Position 194 (D194) interacts with ATP. T201, E203, and E280 together coordinate L-citrulline.

The protein belongs to the argininosuccinate synthase family. Type 2 subfamily. In terms of assembly, homotetramer.

The protein resides in the cytoplasm. The catalysed reaction is L-citrulline + L-aspartate + ATP = 2-(N(omega)-L-arginino)succinate + AMP + diphosphate + H(+). The protein operates within amino-acid biosynthesis; L-arginine biosynthesis; L-arginine from L-ornithine and carbamoyl phosphate: step 2/3. The polypeptide is Argininosuccinate synthase (Dickeya dadantii (strain 3937) (Erwinia chrysanthemi (strain 3937))).